The sequence spans 185 residues: Ribosome-recycling factor (185 aa).

This sequence belongs to the RRF family.

Its subcellular location is the cytoplasm. Responsible for the release of ribosomes from messenger RNA at the termination of protein biosynthesis. May increase the efficiency of translation by recycling ribosomes from one round of translation to another. The chain is Ribosome-recycling factor from Azotobacter vinelandii (strain DJ / ATCC BAA-1303).